The following is a 284-amino-acid chain: Formamidopyrimidine-DNA glycosylase (284 aa).

The active-site Schiff-base intermediate with DNA is the Pro-2. Catalysis depends on Glu-3, which acts as the Proton donor. Lys-61 functions as the Proton donor; for beta-elimination activity in the catalytic mechanism. Residues His-95, Arg-114, and Arg-159 each coordinate DNA. The FPG-type zinc finger occupies 244-278 (WVYGRKGQPCRVCNTPIERIRLAGRSTHFCPTCQR). Residue Arg-268 is the Proton donor; for delta-elimination activity of the active site.

It belongs to the FPG family. Monomer. It depends on Zn(2+) as a cofactor.

The catalysed reaction is Hydrolysis of DNA containing ring-opened 7-methylguanine residues, releasing 2,6-diamino-4-hydroxy-5-(N-methyl)formamidopyrimidine.. It carries out the reaction 2'-deoxyribonucleotide-(2'-deoxyribose 5'-phosphate)-2'-deoxyribonucleotide-DNA = a 3'-end 2'-deoxyribonucleotide-(2,3-dehydro-2,3-deoxyribose 5'-phosphate)-DNA + a 5'-end 5'-phospho-2'-deoxyribonucleoside-DNA + H(+). Functionally, involved in base excision repair of DNA damaged by oxidation or by mutagenic agents. Acts as a DNA glycosylase that recognizes and removes damaged bases. Has a preference for oxidized purines, such as 7,8-dihydro-8-oxoguanine (8-oxoG). Has AP (apurinic/apyrimidinic) lyase activity and introduces nicks in the DNA strand. Cleaves the DNA backbone by beta-delta elimination to generate a single-strand break at the site of the removed base with both 3'- and 5'-phosphates. The sequence is that of Formamidopyrimidine-DNA glycosylase from Gloeobacter violaceus (strain ATCC 29082 / PCC 7421).